The following is a 963-amino-acid chain: SH3 domain-binding protein 4 (963 aa).

Positions 55-114 (GNAKEVIAIKDYCPTNFTTLKFSKGDHLYVLDTSGGEWWYAHNTTEMGYIPSSYVQPLNY) constitute an SH3 1 domain. Phosphoserine occurs at positions 131, 246, 251, 279, and 296. Residues 317 to 454 (TNIVCKLDSS…LEPCMYVAVV (138 aa)) form the ZU5 domain. Residue Ser637 is modified to Phosphoserine. One can recognise an SH3 2 domain in the interval 654 to 724 (SSLKFGKLLK…HTKNVLVVGR (71 aa)).

As to quaternary structure, homodimer or homooligomer. Interacts with DNM2, EPS15, clathrin, the adapter protein complex 2/AP-2 and TFRC. Interacts with the Rag GTPases RRAGA, RRAGB, RRAGC and RRAGD; the interaction is most probably direct, preferentially occurs with their inactive GDP-bound form and is negatively regulated by amino acids. In terms of assembly, (Microbial infection) Interacts with molluscum contagiosum virus protein MC159L; this interaction is important for the suppression of autophagy. In terms of processing, phosphorylated upon EGF stimulation. Phosphorylation prevents interaction with DNM2. Expressed in all tissues tested with higher expression in pancreas. Expressed by retinal pigment epithelial cells (at protein level).

Its subcellular location is the membrane. It localises to the clathrin-coated pit. The protein localises to the cytoplasmic vesicle. It is found in the clathrin-coated vesicle. The protein resides in the nucleus. Functionally, may function in transferrin receptor internalization at the plasma membrane through a cargo-specific control of clathrin-mediated endocytosis. Alternatively, may act as a negative regulator of the amino acid-induced TOR signaling by inhibiting the formation of active Rag GTPase complexes. Preferentially binds inactive Rag GTPase complexes and prevents their interaction with the mTORC1 complex inhibiting its relocalization to lysosomes and its activation. Thereby, may indirectly regulate cell growth, proliferation and autophagy. This Homo sapiens (Human) protein is SH3 domain-binding protein 4 (SH3BP4).